The following is a 257-amino-acid chain: Snake venom serine protease KN10 (257 aa).

The N-terminal stretch at 1 to 18 is a signal peptide; that stretch reads MVLIRVLANLLILQLSYA. The propeptide occupies 19 to 24; it reads QKSSEL. The Peptidase S1 domain maps to 25-248; that stretch reads VVGGDECNIN…HLDWIKSIIA (224 aa). 5 disulfides stabilise this stretch: Cys31-Cys162, Cys49-Cys65, Cys141-Cys209, Cys173-Cys188, and Cys199-Cys224. His64 acts as the Charge relay system in catalysis. An N-linked (GlcNAc...) asparagine glycan is attached at Asn102. Residue Asp109 is the Charge relay system of the active site. 2 N-linked (GlcNAc...) asparagine glycosylation sites follow: Asn120 and Asn121. Ser203 functions as the Charge relay system in the catalytic mechanism.

It belongs to the peptidase S1 family. Snake venom subfamily. Monomer. As to expression, expressed by the venom gland.

The protein resides in the secreted. Its function is as follows. Snake venom serine protease that may act in the hemostasis system of the prey. In Trimeresurus stejnegeri (Chinese green tree viper), this protein is Snake venom serine protease KN10.